The sequence spans 243 residues: Probable fructoselysine utilization operon transcriptional repressor (243 aa).

Residues 10 to 78 (QLLYATVRQR…QGKGTFVQSQ (69 aa)) enclose the HTH gntR-type domain. The H-T-H motif DNA-binding region spans 38 to 57 (ENELCTQYNVSRITIRKAIS).

It participates in carbohydrate metabolism; fructoselysine degradation [regulation]. Its function is as follows. May regulate the transcription of the frlABCDR operon, involved in the utilization of fructoselysine and psicoselysine. The protein is Probable fructoselysine utilization operon transcriptional repressor of Escherichia coli (strain K12).